Consider the following 396-residue polypeptide: Ribosomal RNA large subunit methyltransferase I (396 aa).

Residues 2-79 form the PUA domain; sequence AVRIKLKPGR…REEEIDREFF (78 aa).

This sequence belongs to the methyltransferase superfamily. RlmI family.

It is found in the cytoplasm. It catalyses the reaction cytidine(1962) in 23S rRNA + S-adenosyl-L-methionine = 5-methylcytidine(1962) in 23S rRNA + S-adenosyl-L-homocysteine + H(+). Its function is as follows. Specifically methylates the cytosine at position 1962 (m5C1962) of 23S rRNA. This chain is Ribosomal RNA large subunit methyltransferase I, found in Shewanella sp. (strain MR-7).